The following is a 247-amino-acid chain: UPF0246 protein LSEI_2080 (247 aa).

The protein belongs to the UPF0246 family.

The protein is UPF0246 protein LSEI_2080 of Lacticaseibacillus paracasei (strain ATCC 334 / BCRC 17002 / CCUG 31169 / CIP 107868 / KCTC 3260 / NRRL B-441) (Lactobacillus paracasei).